Consider the following 628-residue polypeptide: Protein SDS23 (628 aa).

The tract at residues 1–126 (MVNPPQPRQM…NKSSSQSIAP (126 aa)) is disordered. The span at 15-24 (RLSTSTSSGP) shows a compositional bias: polar residues. Composition is skewed to low complexity over residues 40-71 (QLQH…PGST) and 109-123 (SRHA…SSQS). CBS domains lie at 258 to 319 (LHPK…RFPS) and 334 to 392 (GSSN…SHLL). Residues 551 to 609 (GRRTDPQAARNQRRRSSTSTTRSSIDSALSAEGILPSGSAIIGSSNAANTGRRGSVEVS) are disordered. The segment covering 587-599 (SGSAIIGSSNAAN) has biased composition (low complexity).

Belongs to the SDS23 family.

Its subcellular location is the cytoplasm. The protein resides in the nucleus. In terms of biological role, involved in DNA replication and cell separation. The chain is Protein SDS23 (SDS24) from Candida albicans (strain SC5314 / ATCC MYA-2876) (Yeast).